The chain runs to 173 residues: MPVVTAVGRRRGFAMPWVSTARSGAVMLANYSAGVCGRVSSPGLNVRKMCLKANTPGAVTWLDTPKRFLSTQTASRCMAVNSSDVVTGRIDPQVLHTPLNTDVDGYAHAMHSSINSGPLEYLPATFSVFPALGDVGDLGGGVGAATYALDRLSNMRSGACVGGGESPWRSLMT.

The N-terminal stretch at 1–25 (MPVVTAVGRRRGFAMPWVSTARSGA) is a signal peptide.

This is an uncharacterized protein from Mycobacterium bovis (strain ATCC BAA-935 / AF2122/97).